The primary structure comprises 387 residues: Dual-specificity RNA methyltransferase RlmN (387 aa).

Glu110 (proton acceptor) is an active-site residue. The Radical SAM core domain maps to 117 to 349 (VGKAGALCVS…NRAGYASPIR (233 aa)). Cys124 and Cys360 are oxidised to a cystine. Positions 131, 135, and 138 each coordinate [4Fe-4S] cluster. S-adenosyl-L-methionine contacts are provided by residues 186 to 187 (GE), Ser218, 240 to 242 (SLH), and Asn317. Cys360 serves as the catalytic S-methylcysteine intermediate.

The protein belongs to the radical SAM superfamily. RlmN family. [4Fe-4S] cluster is required as a cofactor.

It localises to the cytoplasm. The catalysed reaction is adenosine(2503) in 23S rRNA + 2 reduced [2Fe-2S]-[ferredoxin] + 2 S-adenosyl-L-methionine = 2-methyladenosine(2503) in 23S rRNA + 5'-deoxyadenosine + L-methionine + 2 oxidized [2Fe-2S]-[ferredoxin] + S-adenosyl-L-homocysteine. The enzyme catalyses adenosine(37) in tRNA + 2 reduced [2Fe-2S]-[ferredoxin] + 2 S-adenosyl-L-methionine = 2-methyladenosine(37) in tRNA + 5'-deoxyadenosine + L-methionine + 2 oxidized [2Fe-2S]-[ferredoxin] + S-adenosyl-L-homocysteine. Functionally, specifically methylates position 2 of adenine 2503 in 23S rRNA and position 2 of adenine 37 in tRNAs. m2A2503 modification seems to play a crucial role in the proofreading step occurring at the peptidyl transferase center and thus would serve to optimize ribosomal fidelity. This chain is Dual-specificity RNA methyltransferase RlmN, found in Hyphomonas neptunium (strain ATCC 15444).